The chain runs to 418 residues: Gamma-glutamyl phosphate reductase (418 aa).

This sequence belongs to the gamma-glutamyl phosphate reductase family.

The protein resides in the cytoplasm. It catalyses the reaction L-glutamate 5-semialdehyde + phosphate + NADP(+) = L-glutamyl 5-phosphate + NADPH + H(+). It participates in amino-acid biosynthesis; L-proline biosynthesis; L-glutamate 5-semialdehyde from L-glutamate: step 2/2. In terms of biological role, catalyzes the NADPH-dependent reduction of L-glutamate 5-phosphate into L-glutamate 5-semialdehyde and phosphate. The product spontaneously undergoes cyclization to form 1-pyrroline-5-carboxylate. This is Gamma-glutamyl phosphate reductase from Pelobacter propionicus (strain DSM 2379 / NBRC 103807 / OttBd1).